Here is a 176-residue protein sequence, read N- to C-terminus: Large ribosomal subunit protein uL16 (176 aa).

It belongs to the universal ribosomal protein uL16 family.

The polypeptide is Large ribosomal subunit protein uL16 (Halobacterium salinarum (strain ATCC 29341 / DSM 671 / R1)).